The chain runs to 243 residues: NH(3)-dependent NAD(+) synthetase (243 aa).

31–38 (GLSGGVDS) contacts ATP. Aspartate 37 is a binding site for Mg(2+). Deamido-NAD(+) is bound at residue arginine 116. Threonine 136 is an ATP binding site. Glutamate 141 contacts Mg(2+). Residues lysine 149 and aspartate 156 each coordinate deamido-NAD(+). Positions 165 and 187 each coordinate ATP. 233–234 (HK) contributes to the deamido-NAD(+) binding site.

The protein belongs to the NAD synthetase family. In terms of assembly, homodimer.

The catalysed reaction is deamido-NAD(+) + NH4(+) + ATP = AMP + diphosphate + NAD(+) + H(+). The protein operates within cofactor biosynthesis; NAD(+) biosynthesis; NAD(+) from deamido-NAD(+) (ammonia route): step 1/1. In terms of biological role, catalyzes the ATP-dependent amidation of deamido-NAD to form NAD. Uses ammonia as a nitrogen source. The chain is NH(3)-dependent NAD(+) synthetase from Carboxydothermus hydrogenoformans (strain ATCC BAA-161 / DSM 6008 / Z-2901).